The following is a 309-amino-acid chain: Homoserine kinase (309 aa).

Position 91–101 (91–101 (PIGSGLGSSAC)) interacts with ATP.

This sequence belongs to the GHMP kinase family. Homoserine kinase subfamily.

The protein localises to the cytoplasm. It carries out the reaction L-homoserine + ATP = O-phospho-L-homoserine + ADP + H(+). It functions in the pathway amino-acid biosynthesis; L-threonine biosynthesis; L-threonine from L-aspartate: step 4/5. Catalyzes the ATP-dependent phosphorylation of L-homoserine to L-homoserine phosphate. The protein is Homoserine kinase of Edwardsiella ictaluri (strain 93-146).